A 159-amino-acid chain; its full sequence is Small ribosomal subunit protein bS6 (159 aa).

Non-standard amino acids (selenocysteine) are located at U46 and U52.

Belongs to the bacterial ribosomal protein bS6 family.

Functionally, binds together with bS18 to 16S ribosomal RNA. This Desulfotalea psychrophila (strain LSv54 / DSM 12343) protein is Small ribosomal subunit protein bS6.